The chain runs to 699 residues: Proline-rich receptor-like protein kinase PERK7 (699 aa).

The disordered stretch occupies residues 1–167 (MAEGQSPENS…TSNSGSNSSS (167 aa)). At 1–172 (MAEGQSPENS…SNSSSNDGLN (172 aa)) the chain is on the extracellular side. 2 stretches are compositionally biased toward pro residues: residues 9–23 (NSPP…PSPP) and 43–68 (SPPP…PPLP). A glycan (N-linked (GlcNAc...) asparagine) is linked at N70. The segment covering 100–121 (PPQQSDNNGNKGNNNENNKGND) has biased composition (low complexity). N-linked (GlcNAc...) asparagine glycosylation occurs at N131. A compositionally biased stretch (polar residues) spans 148–158 (HSQPRSLAPPT). N-linked (GlcNAc...) asparagine glycosylation occurs at N164. Residues 173 to 193 (IGAVIGLVAAAGILFIVMILL) form a helical membrane-spanning segment. Topologically, residues 194–699 (CVCCFRKKKK…SKTTTTNRGI (506 aa)) are cytoplasmic. T325 carries the phosphothreonine modification. Residues 336–615 (FSKDRLLGQG…VRTLEGDASL (280 aa)) form the Protein kinase domain. ATP-binding positions include 342–350 (LGQGGFGYV) and K364. Phosphotyrosine is present on Y410. D461 acts as the Proton acceptor in catalysis. Residues S465 and S494 each carry the phosphoserine modification. Residues T495 and T500 each carry the phosphothreonine modification. Y508 bears the Phosphotyrosine mark. Disordered stretches follow at residues 609–639 (LEGD…DYEM) and 658–699 (DYGA…NRGI). The segment covering 687 to 699 (GSTSKTTTTNRGI) has biased composition (polar residues).

It belongs to the protein kinase superfamily. Ser/Thr protein kinase family. As to expression, mostly expressed in flower buds.

It is found in the cell membrane. The catalysed reaction is L-seryl-[protein] + ATP = O-phospho-L-seryl-[protein] + ADP + H(+). It catalyses the reaction L-threonyl-[protein] + ATP = O-phospho-L-threonyl-[protein] + ADP + H(+). The sequence is that of Proline-rich receptor-like protein kinase PERK7 (PERK7) from Arabidopsis thaliana (Mouse-ear cress).